A 1107-amino-acid chain; its full sequence is MSKLFGNKSQRDLKEVKPFVDKIKVAYGEIERLSDDDLRGRTAILRQKIQDYVKDERAEIDKLKVEVEGKDLDEREEIWAQVDKLEKEILDKMEVVLDEILPEAFAIIKDTARRFAQNETIRVKATDLDRDLAINHDFVSIEGDTAVYQNHWVAGGNEILWDMIHYDVQLIGGTVLHKGKIAEMATGEGKTLVATLPVFLNALTGNGVHVVTVNDYLSKRDSEWMGPLYMFHGLTVDCIDKHQPNSDARRKAYNADITFGTNNEFGFDYLRDNMATSPKDLVQRKHNYAIVDEVDSVLIDDARTPLIISGPTPKGEDQLFEEFLPNVEKVVEAQRKLCSQLLIDAKNKMASEDKKEQEEGSLLLFRSFKGLPKNKQLIKYLSEPGIKSSMLKTEEAYMAENMRNMHLVTDELYFIIDEKRNSVELTEKGIDLLTSRTDDPKFFVLPDIAAELSALDNMESDAEKRREAKDEIIANYSIKSERVHTVNQLLKAYALFEKDDQYVVMDNKVLIVDEQTGRIMDGRRYSDGLHQAIEAKEHVKVEAATQTFATITLQNYFRMYHKLAGMTGTAETEAGELWDIYKLDVVVIPTNKPIARKDMNDRIYKTAREKYAAVIEEIVRLVEEGRPVLVGTTSVEISELLSRMLRLRGIQHNVLNAKLHQKEAEIVAQAGQKGTVTIATNMAGRGTDIKLSAEVKKAGGLAIIGTERHESRRVDRQLRGRSGRQGDPGSSIFYVSLEDHLMRLFATEKIASLMDRLGFKEGEVLENNMLSKSVERAQKKVEENNFGIRKHLLEYDDVMNSQREVIYTRRRHALMGERIGMDVLNTIYDVCKALIDNYAEANDFEGFKEDLMRALAIESPITQEIFRGKKAEELTDMLFDEAYKSFQRKMDLIAEVAHPVVHQVFETQAAVYERILIPITDGKRVYNIGCNLREADETQGKSIIKEFEKAIVLHTIDESWKEHLREMDELRNSVQNASYENKDPLLIYKLESYELFRKMVEAMNRKTVAILMRARIPVPEAPSQEELEHRRQIEIRHAAEQRTDMSKYRTQKDDIEAQQKAQRDAASRPQGAAAPQTPIRNENKIGRNDPCPCGSGKKFKQCHGRNL.

Residues Gln-169, 187 to 191, and Asp-688 each bind ATP; that span reads GEGKT. Over residues 1036–1066 the composition is skewed to basic and acidic residues; the sequence is RHAAEQRTDMSKYRTQKDDIEAQQKAQRDAA. Residues 1036 to 1107 form a disordered region; sequence RHAAEQRTDM…KFKQCHGRNL (72 aa). Residues Cys-1091, Cys-1093, Cys-1102, and His-1103 each coordinate Zn(2+). The span at 1097-1107 shows a compositional bias: basic residues; sequence KKFKQCHGRNL.

It belongs to the SecA family. Monomer and homodimer. Part of the essential Sec protein translocation apparatus which comprises SecA, SecYEG and auxiliary proteins SecDF. Other proteins may also be involved. Requires Zn(2+) as cofactor.

It is found in the cell inner membrane. Its subcellular location is the cytoplasm. The enzyme catalyses ATP + H2O + cellular proteinSide 1 = ADP + phosphate + cellular proteinSide 2.. Its function is as follows. Part of the Sec protein translocase complex. Interacts with the SecYEG preprotein conducting channel. Has a central role in coupling the hydrolysis of ATP to the transfer of proteins into and across the cell membrane, serving as an ATP-driven molecular motor driving the stepwise translocation of polypeptide chains across the membrane. The sequence is that of Protein translocase subunit SecA from Porphyromonas gingivalis (strain ATCC BAA-308 / W83).